The sequence spans 196 residues: Imidazoleglycerol-phosphate dehydratase (196 aa).

This sequence belongs to the imidazoleglycerol-phosphate dehydratase family.

Its subcellular location is the cytoplasm. The enzyme catalyses D-erythro-1-(imidazol-4-yl)glycerol 3-phosphate = 3-(imidazol-4-yl)-2-oxopropyl phosphate + H2O. It participates in amino-acid biosynthesis; L-histidine biosynthesis; L-histidine from 5-phospho-alpha-D-ribose 1-diphosphate: step 6/9. The sequence is that of Imidazoleglycerol-phosphate dehydratase from Desulfitobacterium hafniense (strain Y51).